The sequence spans 438 residues: GTPase Der (438 aa).

2 EngA-type G domains span residues 4-169 and 178-353; these read PVVA…PEKG and IDVA…DQNS. GTP is bound by residues 10 to 17, 57 to 61, 120 to 123, 184 to 191, 231 to 235, and 296 to 299; these read GRPNVGKS, DTGGI, NKVD, GKPNVGKS, DTAGL, and NKWD. The KH-like domain occupies 354–438; the sequence is RRVKTGLLNE…PIRLKFKQKT (85 aa).

The protein belongs to the TRAFAC class TrmE-Era-EngA-EngB-Septin-like GTPase superfamily. EngA (Der) GTPase family. In terms of assembly, associates with the 50S ribosomal subunit.

GTPase that plays an essential role in the late steps of ribosome biogenesis. The protein is GTPase Der of Halothermothrix orenii (strain H 168 / OCM 544 / DSM 9562).